Consider the following 232-residue polypeptide: Phosphatidylserine decarboxylase proenzyme (232 aa).

Residue S190 is the Schiff-base intermediate with substrate; via pyruvic acid of the active site. S190 bears the Pyruvic acid (Ser); by autocatalysis mark.

The protein belongs to the phosphatidylserine decarboxylase family. PSD-A subfamily. In terms of assembly, heterodimer of a large membrane-associated beta subunit and a small pyruvoyl-containing alpha subunit. Pyruvate is required as a cofactor. Post-translationally, is synthesized initially as an inactive proenzyme. Formation of the active enzyme involves a self-maturation process in which the active site pyruvoyl group is generated from an internal serine residue via an autocatalytic post-translational modification. Two non-identical subunits are generated from the proenzyme in this reaction, and the pyruvate is formed at the N-terminus of the alpha chain, which is derived from the carboxyl end of the proenzyme. The post-translation cleavage follows an unusual pathway, termed non-hydrolytic serinolysis, in which the side chain hydroxyl group of the serine supplies its oxygen atom to form the C-terminus of the beta chain, while the remainder of the serine residue undergoes an oxidative deamination to produce ammonia and the pyruvoyl prosthetic group on the alpha chain.

The protein localises to the cell membrane. The enzyme catalyses a 1,2-diacyl-sn-glycero-3-phospho-L-serine + H(+) = a 1,2-diacyl-sn-glycero-3-phosphoethanolamine + CO2. Its pathway is phospholipid metabolism; phosphatidylethanolamine biosynthesis; phosphatidylethanolamine from CDP-diacylglycerol: step 2/2. Functionally, catalyzes the formation of phosphatidylethanolamine (PtdEtn) from phosphatidylserine (PtdSer). This Rhizobium johnstonii (strain DSM 114642 / LMG 32736 / 3841) (Rhizobium leguminosarum bv. viciae) protein is Phosphatidylserine decarboxylase proenzyme.